A 91-amino-acid chain; its full sequence is YcgL domain-containing protein ETA_15380 (91 aa).

Residues 1 to 85 (MFCVIYRSPQ…PLESLLKIHL (85 aa)) enclose the YcgL domain.

The chain is YcgL domain-containing protein ETA_15380 from Erwinia tasmaniensis (strain DSM 17950 / CFBP 7177 / CIP 109463 / NCPPB 4357 / Et1/99).